Here is a 285-residue protein sequence, read N- to C-terminus: MSVRYAGLLLAAVAVSAHINEVNSIVFPGSLHIDNRNGHVQRDLRSADNGNEERNAILETLSNHLASAFGYLWTKEAQEMTNSAWSALRNKESSLPLYSEGVAREYIETAALNTLTAEHRLARAEAYMVSMIVALRGVENPESLRNSADNLQQFLINVWKTGKKQPAQVFELLEHVPYEEGNASLVNDSKFAIWMAYMGKTFDHQFKNWADVQHNEQLRIEGDKEKKGGPDYVEGTESRGKKRGQTEAPDLEPGLTPKQKRLKRMELQRVKKILLNINLMGIGRS.

An N-terminal signal peptide occupies residues 1–24 (MSVRYAGLLLAAVAVSAHINEVNS). The RxLR-dEER motif lies at 42 to 54 (RDLRSADNGNEER). Residues N182 and N187 are each glycosylated (N-linked (GlcNAc...) asparagine). A compositionally biased stretch (basic and acidic residues) spans 220–229 (IEGDKEKKGG). Residues 220-262 (IEGDKEKKGGPDYVEGTESRGKKRGQTEAPDLEPGLTPKQKRL) form a disordered region. A Bipartite nuclear localization signal motif is present at residues 239–264 (RGKKRGQTEAPDLEPGLTPKQKRLKR).

Belongs to the RxLR effector family. As to quaternary structure, interacts with host RCD1 and SRO1 transcription co-regulators.

The protein resides in the secreted. It is found in the host nucleus. Functionally, secreted effector that suppresses pathogen-associated molecular pattern (PAMP)-triggered immunity (PTI) in host plants. Binds to RCD1 and SRO1 transcription co-regulators to attenuate transcriptional activation of salicylic acid (SA)-induced defense genes and alters plant growth responses to light. Suppresses SA signal transduction but not SA levels. This is Secreted RxLR effector protein 106 from Hyaloperonospora arabidopsidis (strain Emoy2) (Downy mildew agent).